The chain runs to 567 residues: Microtubule-associated protein 70-1 (567 aa).

Residues 38–341 (VRVELTRLEN…AARSEAQLKD (304 aa)) are a coiled coil. The interval 220–440 (ILDRMHRQKV…SGMNVSTDSS (221 aa)) is required for targeting to microtubules. Disordered stretches follow at residues 425 to 457 (KGHV…EFTS) and 534 to 567 (LEKE…ARNM). Basic and acidic residues predominate over residues 440-453 (SEDKESNNSDEKAN). Positions 516-545 (KKRRMEVAAMEKEMAALRLEKEQDNKAKRF) form a coiled coil.

The protein belongs to the MAP70 family.

It localises to the cytoplasm. It is found in the cytoskeleton. Functionally, plant-specific protein that interact with microtubules. The sequence is that of Microtubule-associated protein 70-1 (MAP70.1) from Oryza sativa subsp. japonica (Rice).